Consider the following 170-residue polypeptide: NADH-quinone oxidoreductase subunit E (170 aa).

The [2Fe-2S] cluster site is built by C93, C98, C134, and C138.

Belongs to the complex I 24 kDa subunit family. The cofactor is [2Fe-2S] cluster.

It carries out the reaction a quinone + NADH + 5 H(+)(in) = a quinol + NAD(+) + 4 H(+)(out). Functionally, NDH-1 shuttles electrons from NADH, via FMN and iron-sulfur (Fe-S) centers, to quinones in the respiratory chain. Couples the redox reaction to proton translocation (for every two electrons transferred, four hydrogen ions are translocated across the cytoplasmic membrane), and thus conserves the redox energy in a proton gradient. This Rickettsia typhi (strain ATCC VR-144 / Wilmington) protein is NADH-quinone oxidoreductase subunit E (nuoE).